The following is a 335-amino-acid chain: Acetyl-coenzyme A carboxylase carboxyl transferase subunit alpha (335 aa).

The region spanning 40-294 is the CoA carboxyltransferase C-terminal domain; the sequence is QLETLATRRR…KEAIEKHLDT (255 aa).

It belongs to the AccA family. Acetyl-CoA carboxylase is a heterohexamer composed of biotin carboxyl carrier protein (AccB), biotin carboxylase (AccC) and two subunits each of ACCase subunit alpha (AccA) and ACCase subunit beta (AccD).

Its subcellular location is the cytoplasm. The enzyme catalyses N(6)-carboxybiotinyl-L-lysyl-[protein] + acetyl-CoA = N(6)-biotinyl-L-lysyl-[protein] + malonyl-CoA. It functions in the pathway lipid metabolism; malonyl-CoA biosynthesis; malonyl-CoA from acetyl-CoA: step 1/1. In terms of biological role, component of the acetyl coenzyme A carboxylase (ACC) complex. First, biotin carboxylase catalyzes the carboxylation of biotin on its carrier protein (BCCP) and then the CO(2) group is transferred by the carboxyltransferase to acetyl-CoA to form malonyl-CoA. This Prochlorococcus marinus (strain MIT 9312) protein is Acetyl-coenzyme A carboxylase carboxyl transferase subunit alpha.